Reading from the N-terminus, the 366-residue chain is tRNA 2-selenouridine synthase (366 aa).

The 124-residue stretch at 12-135 (FLNDVPMMDA…MRTFLLDTLH (124 aa)) folds into the Rhodanese domain. The S-selanylcysteine intermediate role is filled by Cys95.

This sequence belongs to the SelU family. In terms of assembly, monomer.

It catalyses the reaction 5-methylaminomethyl-2-thiouridine(34) in tRNA + selenophosphate + (2E)-geranyl diphosphate + H2O + H(+) = 5-methylaminomethyl-2-selenouridine(34) in tRNA + (2E)-thiogeraniol + phosphate + diphosphate. The catalysed reaction is 5-methylaminomethyl-2-thiouridine(34) in tRNA + (2E)-geranyl diphosphate = 5-methylaminomethyl-S-(2E)-geranyl-thiouridine(34) in tRNA + diphosphate. It carries out the reaction 5-methylaminomethyl-S-(2E)-geranyl-thiouridine(34) in tRNA + selenophosphate + H(+) = 5-methylaminomethyl-2-(Se-phospho)selenouridine(34) in tRNA + (2E)-thiogeraniol. The enzyme catalyses 5-methylaminomethyl-2-(Se-phospho)selenouridine(34) in tRNA + H2O = 5-methylaminomethyl-2-selenouridine(34) in tRNA + phosphate. In terms of biological role, involved in the post-transcriptional modification of the uridine at the wobble position (U34) of tRNA(Lys), tRNA(Glu) and tRNA(Gln). Catalyzes the conversion of 2-thiouridine (S2U-RNA) to 2-selenouridine (Se2U-RNA). Acts in a two-step process involving geranylation of 2-thiouridine (S2U) to S-geranyl-2-thiouridine (geS2U) and subsequent selenation of the latter derivative to 2-selenouridine (Se2U) in the tRNA chain. This Pseudomonas syringae pv. syringae (strain B728a) protein is tRNA 2-selenouridine synthase.